Consider the following 162-residue polypeptide: Endoribonuclease YbeY (162 aa).

3 residues coordinate Zn(2+): histidine 127, histidine 131, and histidine 137.

The protein belongs to the endoribonuclease YbeY family. Requires Zn(2+) as cofactor.

The protein localises to the cytoplasm. In terms of biological role, single strand-specific metallo-endoribonuclease involved in late-stage 70S ribosome quality control and in maturation of the 3' terminus of the 16S rRNA. In Acetivibrio thermocellus (strain ATCC 27405 / DSM 1237 / JCM 9322 / NBRC 103400 / NCIMB 10682 / NRRL B-4536 / VPI 7372) (Clostridium thermocellum), this protein is Endoribonuclease YbeY.